Here is a 236-residue protein sequence, read N- to C-terminus: Ubiquinone biosynthesis O-methyltransferase (236 aa).

Arg-36, Gly-56, Asp-77, and Met-125 together coordinate S-adenosyl-L-methionine.

The protein belongs to the methyltransferase superfamily. UbiG/COQ3 family.

It catalyses the reaction a 3-demethylubiquinol + S-adenosyl-L-methionine = a ubiquinol + S-adenosyl-L-homocysteine + H(+). The catalysed reaction is a 3-(all-trans-polyprenyl)benzene-1,2-diol + S-adenosyl-L-methionine = a 2-methoxy-6-(all-trans-polyprenyl)phenol + S-adenosyl-L-homocysteine + H(+). Its pathway is cofactor biosynthesis; ubiquinone biosynthesis. In terms of biological role, O-methyltransferase that catalyzes the 2 O-methylation steps in the ubiquinone biosynthetic pathway. In Haemophilus ducreyi (strain 35000HP / ATCC 700724), this protein is Ubiquinone biosynthesis O-methyltransferase.